The following is a 110-amino-acid chain: Thiosulfate sulfurtransferase GlpE (110 aa).

The region spanning 17–105 is the Rhodanese domain; it reads RENGAQVVDI…WRSVYPADTS (89 aa). Residue C65 is the Cysteine persulfide intermediate of the active site.

The protein belongs to the GlpE family.

The protein resides in the cytoplasm. The catalysed reaction is thiosulfate + hydrogen cyanide = thiocyanate + sulfite + 2 H(+). It catalyses the reaction thiosulfate + [thioredoxin]-dithiol = [thioredoxin]-disulfide + hydrogen sulfide + sulfite + 2 H(+). In terms of biological role, transferase that catalyzes the transfer of sulfur from thiosulfate to thiophilic acceptors such as cyanide or dithiols. May function in a CysM-independent thiosulfate assimilation pathway by catalyzing the conversion of thiosulfate to sulfite, which can then be used for L-cysteine biosynthesis. The polypeptide is Thiosulfate sulfurtransferase GlpE (Pseudomonas aeruginosa (strain LESB58)).